The primary structure comprises 385 residues: 8-amino-7-oxononanoate synthase (385 aa).

Arginine 21 is a binding site for substrate. 108–109 (GF) contacts pyridoxal 5'-phosphate. Residue histidine 133 coordinates substrate. Pyridoxal 5'-phosphate-binding residues include serine 179, histidine 207, and threonine 233. Residue lysine 236 is modified to N6-(pyridoxal phosphate)lysine. Substrate is bound at residue threonine 352.

It belongs to the class-II pyridoxal-phosphate-dependent aminotransferase family. BioF subfamily. As to quaternary structure, homodimer. Pyridoxal 5'-phosphate is required as a cofactor.

The enzyme catalyses 6-carboxyhexanoyl-[ACP] + L-alanine + H(+) = (8S)-8-amino-7-oxononanoate + holo-[ACP] + CO2. Its pathway is cofactor biosynthesis; biotin biosynthesis. Functionally, catalyzes the decarboxylative condensation of pimeloyl-[acyl-carrier protein] and L-alanine to produce 8-amino-7-oxononanoate (AON), [acyl-carrier protein], and carbon dioxide. The sequence is that of 8-amino-7-oxononanoate synthase from Salmonella newport (strain SL254).